The sequence spans 278 residues: Orotidine 5'-phosphate decarboxylase (278 aa).

Lys-95 acts as the Proton donor in catalysis.

This sequence belongs to the OMP decarboxylase family. Type 2 subfamily.

The catalysed reaction is orotidine 5'-phosphate + H(+) = UMP + CO2. The protein operates within pyrimidine metabolism; UMP biosynthesis via de novo pathway; UMP from orotate: step 2/2. The polypeptide is Orotidine 5'-phosphate decarboxylase (Corynebacterium glutamicum (strain R)).